The following is a 600-amino-acid chain: DNA repair and recombination protein mus-11 (600 aa).

The DNA-binding element occupies 148–152; it reads KRALR. The span at 268 to 319 shows a compositional bias: polar residues; that stretch reads LNPQAQQSRPLSRSGSTGSLNTRQQPQNSHQFTARAQSRPPQQQLNSNQSRP. 2 disordered regions span residues 268-357 and 387-600; these read LNPQ…AGAA and APKP…QRLA. Composition is skewed to low complexity over residues 325 to 343 and 458 to 470; these read NNSS…TTPQ and ARSA…RAGP. The span at 502 to 512 shows a compositional bias: polar residues; the sequence is GFSSSPSTNRG. 2 stretches are compositionally biased toward low complexity: residues 540 to 564 and 577 to 591; these read SATT…APSA and ANAS…ATSG.

It belongs to the RAD52 family. Part of a complex that includes mei-3/rad51 and mus-11/rad52.

It is found in the nucleus. Involved in DNA double-strand break (DSB) repair and recombination. Promotes the annealing of complementary single-stranded DNA and by stimulation of the mei-3/rad51 recombinase. The protein is DNA repair and recombination protein mus-11 (mus-11) of Neurospora crassa (strain ATCC 24698 / 74-OR23-1A / CBS 708.71 / DSM 1257 / FGSC 987).